The chain runs to 174 residues: Alpha-crystallin B chain (174 aa).

Position 1 is an N-acetylmethionine (Met-1). The sHSP domain occupies 55–163 (RMPSWLETGL…PERSIPITRE (109 aa)). Zn(2+) is bound by residues His-82, His-103, Glu-105, and His-110. A disordered region spans residues 148 to 174 (RKQSDVPERSIPITREEKPAIAGSQRK). Residues 149–166 (KQSDVPERSIPITREEKP) are compositionally biased toward basic and acidic residues.

It belongs to the small heat shock protein (HSP20) family. As to quaternary structure, heteromer composed of three CRYAA and one CRYAB subunits. Aggregates with homologous proteins, including the small heat shock protein HSPB1, to form large heteromeric complexes. Inter-subunit bridging via zinc ions enhances stability, which is crucial as there is no protein turn over in the lens. Lens as well as other tissues.

Functionally, may contribute to the transparency and refractive index of the lens. This Gallus gallus (Chicken) protein is Alpha-crystallin B chain (CRYAB).